Reading from the N-terminus, the 691-residue chain is DNA ligase (691 aa).

NAD(+) contacts are provided by residues 41 to 45, 90 to 91, and glutamate 130; these read DAEYD and SL. Lysine 132 acts as the N6-AMP-lysine intermediate in catalysis. 4 residues coordinate NAD(+): arginine 153, glutamate 190, lysine 307, and lysine 331. Zn(2+) is bound by residues cysteine 425, cysteine 428, cysteine 443, and cysteine 449. The BRCT domain occupies 610 to 691; that stretch reads APQGVLAGKT…MHTLLEGHAR (82 aa).

This sequence belongs to the NAD-dependent DNA ligase family. LigA subfamily. Requires Mg(2+) as cofactor. Mn(2+) is required as a cofactor.

The catalysed reaction is NAD(+) + (deoxyribonucleotide)n-3'-hydroxyl + 5'-phospho-(deoxyribonucleotide)m = (deoxyribonucleotide)n+m + AMP + beta-nicotinamide D-nucleotide.. Functionally, DNA ligase that catalyzes the formation of phosphodiester linkages between 5'-phosphoryl and 3'-hydroxyl groups in double-stranded DNA using NAD as a coenzyme and as the energy source for the reaction. It is essential for DNA replication and repair of damaged DNA. The polypeptide is DNA ligase (Burkholderia pseudomallei (strain 668)).